The primary structure comprises 1013 residues: Adhesion G-protein coupled receptor G2 (1013 aa).

An N-terminal signal peptide occupies residues 1–37 (MLFSGGQYSPVGRPEEVLLIYKIFLVIICFHAILVTS). Over 38 to 623 (LKENAGNSSL…TSLPPSQMMA (586 aa)) the chain is Extracellular. 18 N-linked (GlcNAc...) asparagine glycosylation sites follow: N44, N78, N92, N104, N128, N137, N155, N179, N187, N366, N431, N452, N457, N524, N538, N543, N547, and N593. The GAIN-B domain occupies 457–615 (NTTTFAAQDP…GILLDLSRTS (159 aa)). Intrachain disulfides connect C566–C597 and C585–C599. The GPS stretch occupies residues 566–615 (CVFWDLNRNGGRGGWSSDGCSVKEKRMNETICTCSHLTSFGILLDLSRTS). The segment at 604–615 (SFGILLDLSRTS) is stachel. A helical transmembrane segment spans residues 624–644 (LTFITYIGCGLSSIFLSVTLV). Topologically, residues 645-663 (TYIAFEKIRRDYPSKILIQ) are cytoplasmic. The chain crosses the membrane as a helical span at residues 664-684 (LCAALLLLNLVFLLDSWIALY). Over 685 to 688 (NARG) the chain is Extracellular. Residues 689 to 709 (FCISVAVFLHYFLLVSFTWMG) traverse the membrane as a helical segment. Residues C690 and C774 are joined by a disulfide bond. The Cytoplasmic portion of the chain corresponds to 710–733 (LEAFHMYLALVKVFNTYIRKYILK). Residues 734–754 (FCIVGWGIPAVVVSIVLTISP) traverse the membrane as a helical segment. At 755–785 (DNYGIGSYGKFPNGTPDDFCWINSSVVFYIT) the chain is on the extracellular side. A glycan (N-linked (GlcNAc...) asparagine) is linked at N777. A helical transmembrane segment spans residues 786–806 (VVGYFCVIFLLNVSMFIVVLV). Residues 807–830 (QLCRIKKKKQLGAQRKTSIQDLRS) are Cytoplasmic-facing. A helical membrane pass occupies residues 831–851 (IAGLTFLLGITWGFAFFAWGP). The Extracellular segment spans residues 852-853 (VN). The N-linked (GlcNAc...) asparagine glycan is linked to N853. The helical transmembrane segment at 854–874 (LTFMYLFAIFNTLQGFFIFIF) threads the bilayer. N864 contacts 3beta-hydroxyandrost-5-en-17-one. The Cytoplasmic portion of the chain corresponds to 875-1013 (YCAAKENVRK…RGSLHFIEQM (139 aa)). At S1006 the chain carries Phosphoserine.

It belongs to the G-protein coupled receptor 2 family. Adhesion G-protein coupled receptor (ADGR) subfamily. As to quaternary structure, heterodimer of 2 chains generated by proteolytic processing; the large extracellular N-terminal fragment and the membrane-bound C-terminal fragment predominantly remain associated and non-covalently linked. Interacts with CFTR. In terms of processing, proteolytically cleaved into 2 subunits, an extracellular subunit and a seven-transmembrane subunit. Highly glycosylated. In terms of tissue distribution, epididymis-specific expression (at protein level). Associated with apical membranes of efferent ductule and proximal epididymal duct epithelia.

It is found in the apical cell membrane. With respect to regulation, forms a heterodimer of 2 chains generated by proteolytic processing that remain associated through non-covalent interactions mediated by the GAIN-B domain. In the inactivated receptor, the Stachel sequence (also named stalk) is embedded in the GAIN-B domain, where it adopts a beta-strand conformation. On activation, the Stachel moves into the 7 transmembrane region and adopts a twisted hook-shaped configuration that forms contacts within the receptor, leading to coupling of a G-alpha protein, which activates signaling. The cleaved GAIN-B and N-terminal domains can then dissociate from the rest of the receptor. Deoxycorticosterone (DOC) acts as an antagonist of ADGRG2. In terms of biological role, adhesion G-protein coupled receptor (aGPCR) for steroid hormones, such as dehydroepiandrosterone (DHEA; also named 3beta-hydroxyandrost-5-en-17-one) and androstenedione. Involved in a signal transduction pathway controlling epididymal function and male fertility. Ligand binding causes a conformation change that triggers signaling via guanine nucleotide-binding proteins (G proteins) and modulates the activity of downstream effectors, such as adenylate cyclase. ADGRG2 is coupled to G(s) G proteins and mediates activation of adenylate cyclase activity. Also able to couple with G(q) G proteins in vitro. May regulate fluid exchange within epididymis. The sequence is that of Adhesion G-protein coupled receptor G2 from Rattus norvegicus (Rat).